The chain runs to 59 residues: U-scoloptoxin(23)-Er2a (59 aa).

This sequence belongs to the scoloptoxin-23 family. Contains 1 disulfide bond. Expressed by the venom gland.

It is found in the secreted. In Ethmostigmus rubripes (Giant centipede), this protein is U-scoloptoxin(23)-Er2a.